We begin with the raw amino-acid sequence, 434 residues long: uncharacterized protein (434 aa).

An N-terminal signal peptide occupies residues 1-17 (MTFLLFQLLVLLRYSIG). The next 12 helical transmembrane spans lie at 48–68 (AAIS…FTVL), 70–90 (EWVY…SVTA), 112–132 (YRVA…FTIF), 141–161 (TYGT…NAVV), 173–193 (WITG…RLVT), 206–226 (YGVH…TSFV), 232–252 (YCGL…LSGL), 271–291 (EGVY…HLGY), 305–325 (TSSI…TILF), 344–364 (WVLA…YIPL), 380–400 (ATFL…DTIF), and 404–424 (FSSL…IGTI).

It localises to the membrane. This is an uncharacterized protein from Arabidopsis thaliana (Mouse-ear cress).